A 412-amino-acid polypeptide reads, in one-letter code: Putative competence-damage inducible protein (412 aa).

This sequence belongs to the CinA family.

The chain is Putative competence-damage inducible protein from Bacillus cereus (strain ZK / E33L).